Reading from the N-terminus, the 830-residue chain is Lon protease (830 aa).

Residues 20-215 (LPAVAIRDVV…LLIKILANEV (196 aa)) enclose the Lon N-terminal domain. ATP is bound at residue 367-374 (GPPGVGKT). The 180-residue stretch at 602–781 (ENGVGISTGL…DEIVKIAFEK (180 aa)) folds into the Lon proteolytic domain. Catalysis depends on residues serine 687 and lysine 730. The disordered stretch occupies residues 784-830 (PKSSFKKSKTAPKKESAKKAAKSKKPAVKKPAVKKTKQVKKTAKKKK). The segment covering 802-830 (KAAKSKKPAVKKPAVKKTKQVKKTAKKKK) has biased composition (basic residues).

The protein belongs to the peptidase S16 family. In terms of assembly, homohexamer. Organized in a ring with a central cavity.

The protein resides in the cytoplasm. The catalysed reaction is Hydrolysis of proteins in presence of ATP.. In terms of biological role, ATP-dependent serine protease that mediates the selective degradation of mutant and abnormal proteins as well as certain short-lived regulatory proteins. Required for cellular homeostasis and for survival from DNA damage and developmental changes induced by stress. Degrades polypeptides processively to yield small peptide fragments that are 5 to 10 amino acids long. Binds to DNA in a double-stranded, site-specific manner. The sequence is that of Lon protease from Elusimicrobium minutum (strain Pei191).